A 573-amino-acid polypeptide reads, in one-letter code: LysM domain-containing protein ARB_01155/01156 (573 aa).

The first 18 residues, 1–18, serve as a signal peptide directing secretion; that stretch reads MIPRNLISGLFLLPFVVA. Residues Asn-46, Asn-71, and Asn-283 are each glycosylated (N-linked (GlcNAc...) asparagine). The 47-residue stretch at 373–419 folds into the LysM domain; it reads RYYEVVAGDQCNTIALHFGITVDAFLSLNTQIDERCSNLWIAYAYCV. A lysM domain region spans residues 375–405; that stretch reads YEVVAGDQCNTIALHFGITVDAFLSLNTQID.

Its subcellular location is the secreted. Its function is as follows. Might have a role in sequestration of chitin oligosaccharides (breakdown products of fungal cell walls that are released during invasion and act as triggers of host immunity) to dampen host defense. This is LysM domain-containing protein ARB_01155/01156 from Arthroderma benhamiae (strain ATCC MYA-4681 / CBS 112371) (Trichophyton mentagrophytes).